Here is a 70-residue protein sequence, read N- to C-terminus: Small ribosomal subunit protein bS21 (70 aa).

The protein belongs to the bacterial ribosomal protein bS21 family.

The polypeptide is Small ribosomal subunit protein bS21 (Helicobacter hepaticus (strain ATCC 51449 / 3B1)).